The following is a 539-amino-acid chain: Keratin, type II cytoskeletal 73 (539 aa).

Residues 1–130 form a head region; it reads MNRQFTCKPG…DPEIQKVRAQ (130 aa). Residues 131-166 form a coil 1A region; sequence EREQIKALNNKFASFIDKVRFLEQQNQVLQTKWELL. Positions 131–444 constitute an IF rod domain; the sequence is EREQIKALNN…KLLEGEECRM (314 aa). Residues 167–185 form a linker 1 region; sequence QQLDLSNCRRNLEPVYEAH. The coil 1B stretch occupies residues 186–277; the sequence is ISSLQKQLDS…CLYEGEITQM (92 aa). The segment at 278-301 is linker 12; it reads QSHISDTSVVLSMDNNRNLDLDSI. The tract at residues 302 to 440 is coil 2; that stretch reads IAEVRAQYED…ATYRKLLEGE (139 aa). Residues 441-539 form a tail region; sequence ECRMSGEHTS…LGSPSKKTMR (99 aa).

It belongs to the intermediate filament family. In terms of assembly, heterotetramer of two type I and two type II keratins.

Functionally, has a role in hair formation. Specific component of keratin intermediate filaments in the inner root sheath (IRS) of the hair follicle. In Mus musculus (Mouse), this protein is Keratin, type II cytoskeletal 73 (Krt73).